A 397-amino-acid polypeptide reads, in one-letter code: Tryptophan synthase beta chain (397 aa).

N6-(pyridoxal phosphate)lysine is present on Lys-87.

This sequence belongs to the TrpB family. Tetramer of two alpha and two beta chains. It depends on pyridoxal 5'-phosphate as a cofactor.

It catalyses the reaction (1S,2R)-1-C-(indol-3-yl)glycerol 3-phosphate + L-serine = D-glyceraldehyde 3-phosphate + L-tryptophan + H2O. It participates in amino-acid biosynthesis; L-tryptophan biosynthesis; L-tryptophan from chorismate: step 5/5. In terms of biological role, the beta subunit is responsible for the synthesis of L-tryptophan from indole and L-serine. The chain is Tryptophan synthase beta chain from Escherichia coli O17:K52:H18 (strain UMN026 / ExPEC).